A 334-amino-acid polypeptide reads, in one-letter code: Protein-methionine-sulfoxide reductase catalytic subunit MsrP (334 aa).

Positions M1–A44 form a signal peptide, tat-type signal. Residues N88, Y91–E92, C146, T181, N233, R238, and G249–K251 each bind Mo-molybdopterin.

The protein belongs to the MsrP family. Heterodimer of a catalytic subunit (MsrP) and a heme-binding subunit (MsrQ). It depends on Mo-molybdopterin as a cofactor. Predicted to be exported by the Tat system. The position of the signal peptide cleavage has not been experimentally proven.

It localises to the periplasm. It carries out the reaction L-methionyl-[protein] + a quinone + H2O = L-methionyl-(S)-S-oxide-[protein] + a quinol. The catalysed reaction is L-methionyl-[protein] + a quinone + H2O = L-methionyl-(R)-S-oxide-[protein] + a quinol. Part of the MsrPQ system that repairs oxidized periplasmic proteins containing methionine sulfoxide residues (Met-O), using respiratory chain electrons. Thus protects these proteins from oxidative-stress damage caused by reactive species of oxygen and chlorine generated by the host defense mechanisms. MsrPQ is essential for the maintenance of envelope integrity under bleach stress, rescuing a wide series of structurally unrelated periplasmic proteins from methionine oxidation, including the primary periplasmic chaperone SurA and the lipoprotein Pal. The catalytic subunit MsrP is non-stereospecific, being able to reduce both (R-) and (S-) diastereoisomers of methionine sulfoxide. The polypeptide is Protein-methionine-sulfoxide reductase catalytic subunit MsrP (Escherichia coli (strain 55989 / EAEC)).